The primary structure comprises 474 residues: tRNA-2-methylthio-N(6)-dimethylallyladenosine synthase (474 aa).

The 118-residue stretch at 3–120 (KKLHIKTWGC…LPEMINSVRG (118 aa)) folds into the MTTase N-terminal domain. [4Fe-4S] cluster-binding residues include cysteine 12, cysteine 49, cysteine 83, cysteine 157, cysteine 161, and cysteine 164. The Radical SAM core domain occupies 143-375 (RAEGPTAFVS…QERINQQAMA (233 aa)). The TRAM domain occupies 378 to 441 (RRMLGTVQRI…TNSLRGKIVR (64 aa)).

It belongs to the methylthiotransferase family. MiaB subfamily. Monomer. The cofactor is [4Fe-4S] cluster.

The protein resides in the cytoplasm. It catalyses the reaction N(6)-dimethylallyladenosine(37) in tRNA + (sulfur carrier)-SH + AH2 + 2 S-adenosyl-L-methionine = 2-methylsulfanyl-N(6)-dimethylallyladenosine(37) in tRNA + (sulfur carrier)-H + 5'-deoxyadenosine + L-methionine + A + S-adenosyl-L-homocysteine + 2 H(+). In terms of biological role, catalyzes the methylthiolation of N6-(dimethylallyl)adenosine (i(6)A), leading to the formation of 2-methylthio-N6-(dimethylallyl)adenosine (ms(2)i(6)A) at position 37 in tRNAs that read codons beginning with uridine. The polypeptide is tRNA-2-methylthio-N(6)-dimethylallyladenosine synthase (Klebsiella pneumoniae subsp. pneumoniae (strain ATCC 700721 / MGH 78578)).